The chain runs to 97 residues: Aspartyl/glutamyl-tRNA(Asn/Gln) amidotransferase subunit C (97 aa).

Positions 68–97 (ETGFTQEEALSNAPQQSQGQFRTPKVVESA) are disordered. Over residues 70 to 88 (GFTQEEALSNAPQQSQGQF) the composition is skewed to polar residues.

Belongs to the GatC family. In terms of assembly, heterotrimer of A, B and C subunits.

It catalyses the reaction L-glutamyl-tRNA(Gln) + L-glutamine + ATP + H2O = L-glutaminyl-tRNA(Gln) + L-glutamate + ADP + phosphate + H(+). The enzyme catalyses L-aspartyl-tRNA(Asn) + L-glutamine + ATP + H2O = L-asparaginyl-tRNA(Asn) + L-glutamate + ADP + phosphate + 2 H(+). Allows the formation of correctly charged Asn-tRNA(Asn) or Gln-tRNA(Gln) through the transamidation of misacylated Asp-tRNA(Asn) or Glu-tRNA(Gln) in organisms which lack either or both of asparaginyl-tRNA or glutaminyl-tRNA synthetases. The reaction takes place in the presence of glutamine and ATP through an activated phospho-Asp-tRNA(Asn) or phospho-Glu-tRNA(Gln). This is Aspartyl/glutamyl-tRNA(Asn/Gln) amidotransferase subunit C from Akkermansia muciniphila (strain ATCC BAA-835 / DSM 22959 / JCM 33894 / BCRC 81048 / CCUG 64013 / CIP 107961 / Muc).